The primary structure comprises 423 residues: ER-bound oxygenase mpaB' (423 aa).

At Met1–Gln22 the chain is on the lumenal side. Residues Trp23–Leu41 traverse the membrane as a helical segment. Residues Arg42 to His423 are Cytoplasmic-facing.

Belongs to the mpaB oxygenase family.

It is found in the endoplasmic reticulum membrane. It carries out the reaction 4-farnesyl-3,5-dihydroxy-6-methylphthalide + AH2 + 2 O2 = (4E,8E)-10-(4,6-dihydroxy-7-methyl-3-oxo-1,3-dihydro-2-benzofuran-5-yl)-4,8-dimethyldeca-4,8-dienoate + acetone + A + H2O + H(+). It participates in secondary metabolite biosynthesis; terpenoid biosynthesis. In terms of biological role, ER-bound oxygenase; part of the gene cluster that mediates the biosynthesis of mycophenolic acid (MPA), the first isolated antibiotic natural product in the world obtained from a culture of Penicillium brevicompactum in 1893. MpaB' catalyzes the oxidative cleavage the C19-C20 double bond in farnesyl-DHMP (FDHMP) to yield FDHMP-3C via a mycophenolic aldehyde intermediate. The first step of the pathway is the synthesis of 5-methylorsellinic acid (5MOA) by the cytosolic polyketide synthase mpaC. 5MOA is then converted to the phthalide compound 5,7-dihydroxy-4,6-dimethylphthalide (DHMP) by the endoplasmic reticulum-bound cytochrome P450 monooxygenase mpaDE. MpaDE first catalyzes hydroxylation of 5-MOA to 4,6-dihydroxy-2-(hydroxymethyl)-3-methylbenzoic acid (DHMB). MpaDE then acts as a lactone synthase that catalyzes the ring closure to convert DHMB into DHMP. The next step is the prenylation of DHMP by the Golgi apparatus-associated prenyltransferase mpaA to yield farnesyl-DHMP (FDHMP). The ER-bound oxygenase mpaB then mediates the oxidative cleavage the C19-C20 double bond in FDHMP to yield FDHMP-3C via a mycophenolic aldehyde intermediate. The O-methyltransferase mpaG catalyzes the methylation of FDHMP-3C to yield MFDHMP-3C. After the cytosolic methylation of FDHMP-3C, MFDHMP-3C enters into peroxisomes probably via free diffusion due to its low molecular weight. Upon a peroxisomal CoA ligation reaction, catalyzed by a beta-oxidation component enzyme acyl-CoA ligase ACL891, MFDHMP-3C-CoA would then be restricted to peroxisomes for the following beta-oxidation pathway steps. The peroxisomal beta-oxidation machinery than converts MFDHMP-3C-CoA into MPA_CoA, via a beta-oxidation chain-shortening process. Finally mpaH acts as a peroxisomal acyl-CoA hydrolase with high substrate specificity toward MPA-CoA to release the final product MPA. The polypeptide is ER-bound oxygenase mpaB' (Penicillium brevicompactum).